The sequence spans 188 residues: UPF0340 protein GK3370 (188 aa).

Belongs to the UPF0340 family.

This Geobacillus kaustophilus (strain HTA426) protein is UPF0340 protein GK3370.